Reading from the N-terminus, the 557-residue chain is TBCC domain-containing protein 1 (557 aa).

A C-CAP/cofactor C-like domain is found at 290–435 (TTKRAKIACN…LEDHMARTGL (146 aa)).

Belongs to the TBCC family.

Its subcellular location is the cytoplasm. The protein localises to the cytoskeleton. It is found in the microtubule organizing center. The protein resides in the centrosome. It localises to the spindle pole. Plays a role in the regulation of centrosome and Golgi apparatus positioning, with consequences on cell shape and cell migration. The chain is TBCC domain-containing protein 1 (TBCCD1) from Homo sapiens (Human).